The following is a 280-amino-acid chain: Putative pyruvate, phosphate dikinase regulatory protein (280 aa).

ADP is bound at residue 149–156 (GVSRSSKT).

Belongs to the pyruvate, phosphate/water dikinase regulatory protein family. PDRP subfamily.

It carries out the reaction N(tele)-phospho-L-histidyl/L-threonyl-[pyruvate, phosphate dikinase] + ADP = N(tele)-phospho-L-histidyl/O-phospho-L-threonyl-[pyruvate, phosphate dikinase] + AMP + H(+). It catalyses the reaction N(tele)-phospho-L-histidyl/O-phospho-L-threonyl-[pyruvate, phosphate dikinase] + phosphate + H(+) = N(tele)-phospho-L-histidyl/L-threonyl-[pyruvate, phosphate dikinase] + diphosphate. Bifunctional serine/threonine kinase and phosphorylase involved in the regulation of the pyruvate, phosphate dikinase (PPDK) by catalyzing its phosphorylation/dephosphorylation. In Novosphingobium aromaticivorans (strain ATCC 700278 / DSM 12444 / CCUG 56034 / CIP 105152 / NBRC 16084 / F199), this protein is Putative pyruvate, phosphate dikinase regulatory protein.